Here is a 285-residue protein sequence, read N- to C-terminus: MSDVEEAVEEYEEQEEAAEEEHEEAVEEEAGGEAEAGEPCTAEDGEEEEGREAEDGPVEEFKPKPRPFMPNLVPPKIPDGERVDFDDIHRKRMEKDLNELQTLIEAHFENRKKEEEELVSLKDRIEKRRAERAEQQRIRAEREKERQTRLAEERARREEEESRRKAEDEARKKKALSNMMHFGGYIQKAQTERKSGKRQTEREKKKKILAERRKVLAIDHLNEDQLREKAKELWQMIYDLEAEKFDLQEKFKQQKYEINVLRNRINDNQKVSKTRGKAKVTGRWK.

Positions 1–58 (MSDVEEAVEEYEEQEEAAEEEHEEAVEEEAGGEAEAGEPCTAEDGEEEEGREAEDGPV) are enriched in acidic residues. Disordered regions lie at residues 1–83 (MSDV…GERV) and 111–206 (RKKE…EKKK). Serine 2 carries the N-acetylserine modification. Residue serine 2 is modified to Phosphoserine; by CK2. Over residues 66–77 (RPFMPNLVPPKI) the composition is skewed to pro residues. Composition is skewed to basic and acidic residues over residues 111–171 (RKKE…DEAR) and 190–206 (QTERKSGKRQTEREKKK). Threonine 191 is subject to Phosphothreonine; by PKC/PRKCA. Phosphoserine; by PKC/PRKCA is present on serine 195. Residue threonine 200 is modified to Phosphothreonine; by PKC/PRKCA and RAF1. Position 281 is a phosphothreonine; by PKC/PRKCA (threonine 281).

It belongs to the troponin T family. Post-translationally, the N-terminus is blocked. Phosphorylation at Thr-200 by PRKCA induces significant reduction in myofilament calcium sensitivity and actomyosin ATPase activity.

Functionally, troponin T is the tropomyosin-binding subunit of troponin, the thin filament regulatory complex which confers calcium-sensitivity to striated muscle actomyosin ATPase activity. This Bos taurus (Bovine) protein is Troponin T, cardiac muscle (TNNT2).